The sequence spans 350 residues: Heat-inducible transcription repressor HrcA (350 aa).

Belongs to the HrcA family.

Functionally, negative regulator of class I heat shock genes (grpE-dnaK-dnaJ and groELS operons). Prevents heat-shock induction of these operons. This chain is Heat-inducible transcription repressor HrcA, found in Methylococcus capsulatus (strain ATCC 33009 / NCIMB 11132 / Bath).